The chain runs to 334 residues: MDKRMVDQEFHNEDTDLELSLRPTQLKQYIGQSSIKSNLEVFIKAAKLRQEPLDHVLLFGPPGLGKTTLSNIIANEMEVNIRTISGPSLERPGDLAAILSGLQPGDVLFIDEIHRLSSVVEEVLYPAMEDFFLDIIIGKGDEARSIRIDLPPFTLVGATTRAGSLTGPLRDRFGVHLRLEYYNENDLKEIITRTAEVLGTDIDKESALELARRSRGTPRIANRLLKRVRDFQQVNEDDQIYIETTKRALQLLQVDQHGLDYIDHKMMNCIINQYNGGPVGLDTIAVSIGEERVTIEDVYEPFLIQRGFLERTPRGRKATALAYEHFNTTNEKRE.

Residues 1 to 182 (MDKRMVDQEF…FGVHLRLEYY (182 aa)) form a large ATPase domain (RuvB-L) region. ATP is bound by residues leucine 21, arginine 22, glycine 63, lysine 66, threonine 67, threonine 68, 129-131 (EDF), arginine 172, tyrosine 182, and arginine 219. Threonine 67 provides a ligand contact to Mg(2+). The segment at 183-253 (NENDLKEIIT…TTKRALQLLQ (71 aa)) is small ATPAse domain (RuvB-S). The segment at 256 to 334 (QHGLDYIDHK…HFNTTNEKRE (79 aa)) is head domain (RuvB-H). The DNA site is built by arginine 292, arginine 311, and arginine 316.

It belongs to the RuvB family. Homohexamer. Forms an RuvA(8)-RuvB(12)-Holliday junction (HJ) complex. HJ DNA is sandwiched between 2 RuvA tetramers; dsDNA enters through RuvA and exits via RuvB. An RuvB hexamer assembles on each DNA strand where it exits the tetramer. Each RuvB hexamer is contacted by two RuvA subunits (via domain III) on 2 adjacent RuvB subunits; this complex drives branch migration. In the full resolvosome a probable DNA-RuvA(4)-RuvB(12)-RuvC(2) complex forms which resolves the HJ.

The protein localises to the cytoplasm. It catalyses the reaction ATP + H2O = ADP + phosphate + H(+). In terms of biological role, the RuvA-RuvB-RuvC complex processes Holliday junction (HJ) DNA during genetic recombination and DNA repair, while the RuvA-RuvB complex plays an important role in the rescue of blocked DNA replication forks via replication fork reversal (RFR). RuvA specifically binds to HJ cruciform DNA, conferring on it an open structure. The RuvB hexamer acts as an ATP-dependent pump, pulling dsDNA into and through the RuvAB complex. RuvB forms 2 homohexamers on either side of HJ DNA bound by 1 or 2 RuvA tetramers; 4 subunits per hexamer contact DNA at a time. Coordinated motions by a converter formed by DNA-disengaged RuvB subunits stimulates ATP hydrolysis and nucleotide exchange. Immobilization of the converter enables RuvB to convert the ATP-contained energy into a lever motion, pulling 2 nucleotides of DNA out of the RuvA tetramer per ATP hydrolyzed, thus driving DNA branch migration. The RuvB motors rotate together with the DNA substrate, which together with the progressing nucleotide cycle form the mechanistic basis for DNA recombination by continuous HJ branch migration. Branch migration allows RuvC to scan DNA until it finds its consensus sequence, where it cleaves and resolves cruciform DNA. This chain is Holliday junction branch migration complex subunit RuvB, found in Staphylococcus epidermidis (strain ATCC 35984 / DSM 28319 / BCRC 17069 / CCUG 31568 / BM 3577 / RP62A).